The following is a 97-amino-acid chain: Small ribosomal subunit protein bS20 (97 aa).

Positions 76-85 (RNNGARKKAG) are enriched in basic residues. The disordered stretch occupies residues 76 to 97 (RNNGARKKAGLAKALQKVSQAS). Low complexity predominate over residues 86-97 (LAKALQKVSQAS).

The protein belongs to the bacterial ribosomal protein bS20 family.

In terms of biological role, binds directly to 16S ribosomal RNA. This Microcystis aeruginosa (strain NIES-843 / IAM M-2473) protein is Small ribosomal subunit protein bS20.